A 150-amino-acid chain; its full sequence is Peptide deformylase 1 (150 aa).

Positions 88 and 130 each coordinate Fe cation. The active site involves Glu131. Residue His134 coordinates Fe cation.

Belongs to the polypeptide deformylase family. It depends on Fe(2+) as a cofactor.

The enzyme catalyses N-terminal N-formyl-L-methionyl-[peptide] + H2O = N-terminal L-methionyl-[peptide] + formate. In terms of biological role, removes the formyl group from the N-terminal Met of newly synthesized proteins. Requires at least a dipeptide for an efficient rate of reaction. N-terminal L-methionine is a prerequisite for activity but the enzyme has broad specificity at other positions. This Clostridium acetobutylicum (strain ATCC 824 / DSM 792 / JCM 1419 / IAM 19013 / LMG 5710 / NBRC 13948 / NRRL B-527 / VKM B-1787 / 2291 / W) protein is Peptide deformylase 1.